Here is a 422-residue protein sequence, read N- to C-terminus: Phosphoribosylamine--glycine ligase (422 aa).

Residues Lys-107 to Thr-312 form the ATP-grasp domain. Pro-138–Ser-193 contributes to the ATP binding site. Glu-282 and Asn-284 together coordinate Mg(2+).

The protein belongs to the GARS family. Mg(2+) is required as a cofactor. Requires Mn(2+) as cofactor.

The enzyme catalyses 5-phospho-beta-D-ribosylamine + glycine + ATP = N(1)-(5-phospho-beta-D-ribosyl)glycinamide + ADP + phosphate + H(+). It functions in the pathway purine metabolism; IMP biosynthesis via de novo pathway; N(1)-(5-phospho-D-ribosyl)glycinamide from 5-phospho-alpha-D-ribose 1-diphosphate: step 2/2. The sequence is that of Phosphoribosylamine--glycine ligase from Mycobacterium leprae (strain TN).